A 304-amino-acid chain; its full sequence is Ubiquitin thioesterase OTU1 (304 aa).

The UBX-like stretch occupies residues 5 to 83 (RCKTREGTQL…IVEEDKSKLR (79 aa)). In terms of domain architecture, OTU spans 105–230 (IVRRVVPADN…GIHYDPLQRQ (126 aa)). Residues 110-116 (VPADNSC) are cys-loop. Residue Asp113 is part of the active site. Cys116 acts as the Nucleophile in catalysis. The variable-loop stretch occupies residues 169 to 179 (IRREDTWGGAI). The tract at residues 219–223 (YDGIH) is his-loop. Ile222 contacts substrate. Residue His223 is part of the active site. Residues 247–252 (DEALVQ) are S2 site. A C2H2-type zinc finger spans residues 274-298 (LRCMACQKGLTGQSAARDHAKETGH). His298 is a catalytic residue.

Its subcellular location is the cytoplasm. It carries out the reaction Thiol-dependent hydrolysis of ester, thioester, amide, peptide and isopeptide bonds formed by the C-terminal Gly of ubiquitin (a 76-residue protein attached to proteins as an intracellular targeting signal).. Its function is as follows. Hydrolase that can remove conjugated ubiquitin from proteins and participates in endoplasmic reticulum-associated degradation (ERAD) for misfolded lumenal proteins. May act by triming the ubiquitin chain on the associated substrate to facilitate their threading through the VCP/p97 pore. Ubiquitin moieties on substrates may present a steric impediment to the threading process when the substrate is transferred to the VCP pore and threaded through VCP's axial channel. Mediates deubiquitination of 'Lys-27'-, 'Lys-29'- and 'Lys-33'-linked polyubiquitin chains. Also able to hydrolyze 'Lys-11'-linked ubiquitin chains. Cleaves both polyubiquitin and di-ubiquitin. The chain is Ubiquitin thioesterase OTU1 (yod1) from Xenopus laevis (African clawed frog).